We begin with the raw amino-acid sequence, 395 residues long: MAKEKFDRSKSHVNVGTLGHVDHGKTTLTAAITTVLAKHGGGEARAYDQIDGAPEERERGITISTAHVEYETETRHYAHVDCPGHADYVKNMITGAAQMDGAILVVSAADGPMPQTREHILLSRNVGVPAFVVFLNKTDMVDDEELLELVEMEVRDLLTEYDFPGDDLPVIKGSALKALEGVAEYEERILELMAAVDEYIPTPERDKEKPFMMPVEDVFSITGRGTVATGRVERGEVKVGDEVEIIGLAEDASKTTVTGVEMFRKLLDYAEAGDNIGALLRGVSREDINRGQVLAKPGSITPHTNFKAEVYVLSKEEGGRHTPFFSNYRPQFYFRTTDVTGVIELPEGTEMVMPGDNIEMTVELISPIAIEDGTRFSIREGGRTVGSGVVSSIQK.

The tr-type G domain occupies Lys10–Glu204. Residues Gly19–Thr26 form a G1 region. GTP is bound at residue Gly19 to Thr26. Mg(2+) is bound at residue Thr26. The interval Gly60–Ser64 is G2. A G3 region spans residues Asp81 to Gly84. GTP is bound by residues Asp81 to His85 and Asn136 to Asp139. Residues Asn136–Asp139 are G4. A G5 region spans residues Ser174–Leu176.

Belongs to the TRAFAC class translation factor GTPase superfamily. Classic translation factor GTPase family. EF-Tu/EF-1A subfamily. Monomer.

The protein localises to the cytoplasm. It catalyses the reaction GTP + H2O = GDP + phosphate + H(+). In terms of biological role, GTP hydrolase that promotes the GTP-dependent binding of aminoacyl-tRNA to the A-site of ribosomes during protein biosynthesis. This chain is Elongation factor Tu, found in Oceanobacillus iheyensis (strain DSM 14371 / CIP 107618 / JCM 11309 / KCTC 3954 / HTE831).